The following is a 361-amino-acid chain: Phospho-N-acetylmuramoyl-pentapeptide-transferase (361 aa).

10 helical membrane passes run 25 to 45 (RAVM…PWVI), 73 to 93 (TMGG…WADL), 97 to 117 (YVWL…YDDW), 132 to 152 (FKMA…IATA), 167 to 187 (TVAY…VIVG), 200 to 220 (GLAA…AYVA), 240 to 260 (VVVF…FNAY), 264 to 284 (VFMG…VAVI), 289 to 309 (IVLF…MIQV), and 338 to 358 (QVVV…LSTL).

Belongs to the glycosyltransferase 4 family. MraY subfamily. The cofactor is Mg(2+).

The protein resides in the cell inner membrane. The enzyme catalyses UDP-N-acetyl-alpha-D-muramoyl-L-alanyl-gamma-D-glutamyl-meso-2,6-diaminopimeloyl-D-alanyl-D-alanine + di-trans,octa-cis-undecaprenyl phosphate = di-trans,octa-cis-undecaprenyl diphospho-N-acetyl-alpha-D-muramoyl-L-alanyl-D-glutamyl-meso-2,6-diaminopimeloyl-D-alanyl-D-alanine + UMP. It participates in cell wall biogenesis; peptidoglycan biosynthesis. In terms of biological role, catalyzes the initial step of the lipid cycle reactions in the biosynthesis of the cell wall peptidoglycan: transfers peptidoglycan precursor phospho-MurNAc-pentapeptide from UDP-MurNAc-pentapeptide onto the lipid carrier undecaprenyl phosphate, yielding undecaprenyl-pyrophosphoryl-MurNAc-pentapeptide, known as lipid I. This chain is Phospho-N-acetylmuramoyl-pentapeptide-transferase, found in Chromobacterium violaceum (strain ATCC 12472 / DSM 30191 / JCM 1249 / CCUG 213 / NBRC 12614 / NCIMB 9131 / NCTC 9757 / MK).